The chain runs to 103 residues: Matrix Gla protein (103 aa).

An N-terminal signal peptide occupies residues 1 to 19 (MKSLLPLAILAALAVAALC). The residue at position 21 (Glu-21) is a 4-carboxyglutamate. Phosphoserine occurs at positions 22, 25, and 28. Residues 51–97 (HAKAQERVRELNKPAQEINREACDDYKLCERYALIYGYNAAYNRYFR) enclose the Gla domain. A 4-carboxyglutamate mark is found at Glu-56, Glu-60, Glu-67, and Glu-71. An intrachain disulfide couples Cys-73 to Cys-79.

The protein belongs to the osteocalcin/matrix Gla protein family. Post-translationally, requires vitamin K-dependent gamma-carboxylation for its function.

Its subcellular location is the secreted. In terms of biological role, associates with the organic matrix of bone and cartilage. Thought to act as an inhibitor of bone formation. This is Matrix Gla protein (Mgp) from Rattus norvegicus (Rat).